Consider the following 313-residue polypeptide: Bifunctional pinoresinol-lariciresinol reductase 1 (313 aa).

NADP(+) contacts are provided by residues 11–17 (GGTGYIG), arginine 36, and lysine 45. The active-site Proton acceptor is lysine 138. Arginine 142 contributes to the NADP(+) binding site. Residue histidine 271 coordinates substrate.

This sequence belongs to the NmrA-type oxidoreductase family. Isoflavone reductase subfamily. In terms of assembly, dimer.

It carries out the reaction (+)-lariciresinol + NADP(+) = (+)-pinoresinol + NADPH + H(+). The enzyme catalyses (-)-lariciresinol + NADP(+) = (-)-pinoresinol + NADPH + H(+). The catalysed reaction is (+)-secoisolariciresinol + NADP(+) = (-)-lariciresinol + NADPH + H(+). Its function is as follows. Reductase involved in lignan biosynthesis. Catalyzes the enantioselective sequential conversion of (-)-pinoresinol into (-)-lariciresinol and of (-)-lariciresinol into (+)-secoisolariciresinol. Can also convert with a lower efficiency (+)-pinoresinol into (+)-lariciresinol, but not (+)-lariciresinol into (-)-secoisolariciresinol. Abstracts the 4R-hydride from the NADPH cofactor during catalysis. The sequence is that of Bifunctional pinoresinol-lariciresinol reductase 1 (PLR_Tp1) from Thuja plicata (Western red-cedar).